A 362-amino-acid polypeptide reads, in one-letter code: Heat-inducible transcription repressor HrcA (362 aa).

Belongs to the HrcA family.

Negative regulator of class I heat shock genes (grpE-dnaK-dnaJ and groELS operons). Prevents heat-shock induction of these operons. This Rhizobium leguminosarum bv. trifolii (strain WSM2304) protein is Heat-inducible transcription repressor HrcA.